We begin with the raw amino-acid sequence, 436 residues long: GTPase Obg (436 aa).

The 159-residue stretch at S2–L160 folds into the Obg domain. The OBG-type G domain occupies A161–D338. GTP is bound by residues G167 to S174, F192 to V196, D214 to G217, N284 to D287, and S319 to L321. S174 and T194 together coordinate Mg(2+). Residues G358 to D436 enclose the OCT domain.

Belongs to the TRAFAC class OBG-HflX-like GTPase superfamily. OBG GTPase family. Monomer. The cofactor is Mg(2+).

The protein resides in the cytoplasm. Its function is as follows. An essential GTPase which binds GTP, GDP and possibly (p)ppGpp with moderate affinity, with high nucleotide exchange rates and a fairly low GTP hydrolysis rate. Plays a role in control of the cell cycle, stress response, ribosome biogenesis and in those bacteria that undergo differentiation, in morphogenesis control. The polypeptide is GTPase Obg (Streptococcus pneumoniae serotype 2 (strain D39 / NCTC 7466)).